A 213-amino-acid chain; its full sequence is Octanoyltransferase (213 aa).

One can recognise a BPL/LPL catalytic domain in the interval 36-211; sequence TNTPDEIWLV…KFCQQLGFKL (176 aa). Substrate is bound by residues 75 to 82, 142 to 144, and 155 to 157; these read RGGQVTYH, SLG, and GLA. C173 functions as the Acyl-thioester intermediate in the catalytic mechanism.

The protein belongs to the LipB family.

Its subcellular location is the cytoplasm. The enzyme catalyses octanoyl-[ACP] + L-lysyl-[protein] = N(6)-octanoyl-L-lysyl-[protein] + holo-[ACP] + H(+). It participates in protein modification; protein lipoylation via endogenous pathway; protein N(6)-(lipoyl)lysine from octanoyl-[acyl-carrier-protein]: step 1/2. In terms of biological role, catalyzes the transfer of endogenously produced octanoic acid from octanoyl-acyl-carrier-protein onto the lipoyl domains of lipoate-dependent enzymes. Lipoyl-ACP can also act as a substrate although octanoyl-ACP is likely to be the physiological substrate. In Photorhabdus laumondii subsp. laumondii (strain DSM 15139 / CIP 105565 / TT01) (Photorhabdus luminescens subsp. laumondii), this protein is Octanoyltransferase.